Reading from the N-terminus, the 200-residue chain is LexA repressor (200 aa).

A DNA-binding region (H-T-H motif) is located at residues R28 to K48. Active-site for autocatalytic cleavage activity residues include S118 and K155.

It belongs to the peptidase S24 family. Homodimer.

It catalyses the reaction Hydrolysis of Ala-|-Gly bond in repressor LexA.. Functionally, represses a number of genes involved in the response to DNA damage (SOS response), including recA and lexA. In the presence of single-stranded DNA, RecA interacts with LexA causing an autocatalytic cleavage which disrupts the DNA-binding part of LexA, leading to derepression of the SOS regulon and eventually DNA repair. This is LexA repressor from Teredinibacter turnerae (strain ATCC 39867 / T7901).